We begin with the raw amino-acid sequence, 148 residues long: Large ribosomal subunit protein bL9 (148 aa).

This sequence belongs to the bacterial ribosomal protein bL9 family.

Binds to the 23S rRNA. This chain is Large ribosomal subunit protein bL9, found in Chloroflexus aurantiacus (strain ATCC 29366 / DSM 635 / J-10-fl).